The primary structure comprises 644 residues: uncharacterized protein (644 aa).

The chain crosses the membrane as a helical span at residues 16-38 (LLSYLGVVGVGIAGLCIYRSVWG). Basic and acidic residues predominate over residues 586–603 (VRQLQKEAGEGEAEEHPR). A disordered region spans residues 586–613 (VRQLQKEAGEGEAEEHPRARPAAGKAQR).

The protein resides in the membrane. This is an uncharacterized protein from Treponema pallidum (strain Nichols).